Here is a 174-residue protein sequence, read N- to C-terminus: Methionine-R-sulfoxide reductase B2, mitochondrial (174 aa).

The transit peptide at 1–61 (MARLLRALRG…PEQFYVTREK (61 aa)) directs the protein to the mitochondrion. Residues 62–172 (GTEAPFSGMY…NSVALKFKPS (111 aa)) enclose the MsrB domain. Zn(2+) contacts are provided by C82, C85, C138, and C141. The Nucleophile role is filled by C161.

Belongs to the MsrB Met sulfoxide reductase family. It depends on Zn(2+) as a cofactor.

The protein localises to the mitochondrion. The enzyme catalyses L-methionyl-[protein] + [thioredoxin]-disulfide + H2O = L-methionyl-(R)-S-oxide-[protein] + [thioredoxin]-dithiol. It catalyses the reaction [thioredoxin]-disulfide + L-methionine + H2O = L-methionine (R)-S-oxide + [thioredoxin]-dithiol. Functionally, methionine-sulfoxide reductase that specifically reduces methionine (R)-sulfoxide back to methionine. While in many cases, methionine oxidation is the result of random oxidation following oxidative stress, methionine oxidation is also a post-translational modification that takes place on specific residue. Upon oxidative stress, may play a role in the preservation of mitochondrial integrity by decreasing the intracellular reactive oxygen species build-up through its scavenging role, hence contributing to cell survival and protein maintenance. In Rattus norvegicus (Rat), this protein is Methionine-R-sulfoxide reductase B2, mitochondrial (Msrb2).